The primary structure comprises 88 residues: Protein A19 homolog (88 aa).

The disordered stretch occupies residues 1-28 (MADSTAGAKKRKKRSTSATSTRKEPPTV).

It belongs to the chordopoxvirinae A19 family.

In Fowlpox virus (strain NVSL) (FPV), this protein is Protein A19 homolog.